A 209-amino-acid polypeptide reads, in one-letter code: Orotate phosphoribosyltransferase (209 aa).

Residues R96, K100, H102, and 122–130 (EDLISTGGS) each bind 5-phospho-alpha-D-ribose 1-diphosphate. Orotate is bound at residue S126.

It belongs to the purine/pyrimidine phosphoribosyltransferase family. PyrE subfamily. Homodimer. The cofactor is Mg(2+).

It carries out the reaction orotidine 5'-phosphate + diphosphate = orotate + 5-phospho-alpha-D-ribose 1-diphosphate. It functions in the pathway pyrimidine metabolism; UMP biosynthesis via de novo pathway; UMP from orotate: step 1/2. In terms of biological role, catalyzes the transfer of a ribosyl phosphate group from 5-phosphoribose 1-diphosphate to orotate, leading to the formation of orotidine monophosphate (OMP). The chain is Orotate phosphoribosyltransferase from Lactococcus lactis subsp. cremoris (strain MG1363).